The sequence spans 564 residues: Septation ring formation regulator EzrA (564 aa).

The Extracellular segment spans residues 1–4; the sequence is MVLF. A helical transmembrane segment spans residues 5-23; sequence IILAILVVILIAIGVLFYM. Topologically, residues 24–564 are cytoplasmic; that stretch reads RSNKRNLIEK…KHIEEQVIKE (541 aa). 4 coiled-coil regions span residues 84 to 126, 165 to 223, 271 to 303, and 350 to 435; these read VEEK…HQVT, EAAE…LIRE, MISRLELDEANNKLENINDKLDEMYDLIEYEVK, and VRQF…RRLL.

It belongs to the EzrA family.

It is found in the cell membrane. Negative regulator of FtsZ ring formation; modulates the frequency and position of FtsZ ring formation. Inhibits FtsZ ring formation at polar sites. Interacts either with FtsZ or with one of its binding partners to promote depolymerization. In Staphylococcus epidermidis (strain ATCC 35984 / DSM 28319 / BCRC 17069 / CCUG 31568 / BM 3577 / RP62A), this protein is Septation ring formation regulator EzrA.